Here is a 440-residue protein sequence, read N- to C-terminus: Glutamyl-tRNA reductase (440 aa).

Residues 47–50, Ser110, 115–117, and Gln121 contribute to the substrate site; these read TCNR and ERE. The active-site Nucleophile is the Cys48. 192–197 is a binding site for NADP(+); the sequence is GTGAYA.

This sequence belongs to the glutamyl-tRNA reductase family. As to quaternary structure, homodimer.

It carries out the reaction (S)-4-amino-5-oxopentanoate + tRNA(Glu) + NADP(+) = L-glutamyl-tRNA(Glu) + NADPH + H(+). Its pathway is porphyrin-containing compound metabolism; protoporphyrin-IX biosynthesis; 5-aminolevulinate from L-glutamyl-tRNA(Glu): step 1/2. In terms of biological role, catalyzes the NADPH-dependent reduction of glutamyl-tRNA(Glu) to glutamate 1-semialdehyde (GSA). This Paenarthrobacter aurescens (strain TC1) protein is Glutamyl-tRNA reductase.